The primary structure comprises 82 residues: Delta-actitoxin-Aeq2b 2 (82 aa).

Positions M1 to A19 are cleaved as a signal peptide. A propeptide spanning residues D20 to A26 is cleaved from the precursor. 3 disulfide bridges follow: C32-C79, C34-C69, and C62-C80.

It belongs to the sea anemone sodium channel inhibitory toxin family. Type I subfamily.

The protein resides in the secreted. It localises to the nematocyst. Binds specifically to voltage-gated sodium channels (Nav), thereby delaying their inactivation during signal transduction. Causes death to crabs. This is Delta-actitoxin-Aeq2b 2 from Actinia equina (Beadlet anemone).